The following is a 532-amino-acid chain: Phosphoenolpyruvate carboxylase (532 aa).

This sequence belongs to the PEPCase type 2 family. In terms of assembly, homotetramer. Mg(2+) is required as a cofactor.

The catalysed reaction is oxaloacetate + phosphate = phosphoenolpyruvate + hydrogencarbonate. Functionally, catalyzes the irreversible beta-carboxylation of phosphoenolpyruvate (PEP) to form oxaloacetate (OAA), a four-carbon dicarboxylic acid source for the tricarboxylic acid cycle. This chain is Phosphoenolpyruvate carboxylase, found in Methanopyrus kandleri (strain AV19 / DSM 6324 / JCM 9639 / NBRC 100938).